Consider the following 685-residue polypeptide: MRDPAFPGAAMAYHPFHAPRPADFPMSAFLAAAQPSFFPALTLPPAALGKPLSDPSLAGAAEAGLHVSALGHHHQAAHLRSLKSLEPEEEVEDDPKVTLEAKELWDQFHKLGTEMVITKSGRRMFPPFKVRVSGLDKKAKYILLMDIVAADDCRYKFHNSRWMVAGKADPEMPKRMYIHPDSPATGEQWMAKPVAFHKLKLTNNISDKHGFTILNSMHKYQPRFHIVRANDILKLPYSTFRTYVFPETDFIAVTAYQNDKITQLKIDNNPFAKGFRDTGNGRREKRKQLSLPSLRMYEEQCKADRDGAESDASSCDPAPGRDSLHSPLSTEPSPLRLHRSNREEKFGADSDQELDRREVRTARSHSPVGHRSPPSSPRLEDRGKDKNTPEKKSESPESRKDGGDNVFSRSLEKDKGESRRKEDSKSDPECGSLSKETFAPLMVQTDSPPHLSASHLQSLALSGLHGQQFFNPLNAAQPLFIHPGQFTMGPGAFSAMGMGHLLASMTGASALDNGSLSSVQGATGAATFPFHLSQHMLASQGIPMPAFGGLFPYPYTYMAAAAAAASAMPATSAATTMPRNPFLSSTRPRLRFNPYQIPVGIPPSTNLLTTGLSASLNPGSESSKPGSSRESSPIPDTPGHKRSHSNSLSPKASMKDSINELQNIQRLVSGLESQREVSPGRETPK.

Positions 104 to 277 (LWDQFHKLGT…NNPFAKGFRD (174 aa)) form a DNA-binding region, T-box. Disordered regions lie at residues 270–433 (PFAK…CGSL) and 606–660 (NLLT…SINE). Basic and acidic residues-rich tracts occupy residues 296 to 308 (MYEEQCKADRDGA), 340 to 361 (SNREEKFGADSDQELDRREVRT), 378 to 403 (RLEDRGKDKNTPEKKSESPESRKDGG), and 410 to 428 (SLEKDKGESRRKEDSKSDP). Residues 606–617 (NLLTTGLSASLN) are compositionally biased toward polar residues. The span at 618–633 (PGSESSKPGSSRESSP) shows a compositional bias: low complexity. Residues 652-676 (ASMKDSINELQNIQRLVSGLESQRE) are a coiled coil.

As to quaternary structure, binds DNA as a monomer.

It localises to the nucleus. Transcription factor which acts as a transcriptional repressor. May also function as a transcriptional activator. Binds to the palindromic T site 5'-TTCACACCTAGGTGTGAA-3' DNA sequence, or a half-site, which are present in the regulatory region of several genes. This chain is T-box transcription factor TBX2 (tbx2), found in Xenopus tropicalis (Western clawed frog).